The sequence spans 109 residues: Nucleoid-associated protein YbaB (109 aa).

Belongs to the YbaB/EbfC family. Homodimer.

The protein localises to the cytoplasm. Its subcellular location is the nucleoid. Its function is as follows. Binds to DNA and alters its conformation. May be involved in regulation of gene expression, nucleoid organization and DNA protection. This Escherichia coli O8 (strain IAI1) protein is Nucleoid-associated protein YbaB.